The chain runs to 182 residues: Transcription antitermination protein NusB (182 aa).

Positions 159–182 (TPVENSEAEAAGYPVEESIEEDSQ) are disordered.

Belongs to the NusB family.

Its function is as follows. Involved in transcription antitermination. Required for transcription of ribosomal RNA (rRNA) genes. Binds specifically to the boxA antiterminator sequence of the ribosomal RNA (rrn) operons. The polypeptide is Transcription antitermination protein NusB (Corynebacterium diphtheriae (strain ATCC 700971 / NCTC 13129 / Biotype gravis)).